The primary structure comprises 505 residues: Ribose import ATP-binding protein RbsA (505 aa).

ABC transporter domains lie at 12–249 and 259–504; these read LQMK…VGRK and VKKG…VAFS. 44 to 51 is an ATP binding site; that stretch reads GENGAGKS.

This sequence belongs to the ABC transporter superfamily. Ribose importer (TC 3.A.1.2.1) family. In terms of assembly, the complex is composed of an ATP-binding protein (RbsA), two transmembrane proteins (RbsC) and a solute-binding protein (RbsB).

It is found in the cell membrane. It catalyses the reaction D-ribose(out) + ATP + H2O = D-ribose(in) + ADP + phosphate + H(+). Its function is as follows. Part of the ABC transporter complex RbsABC involved in ribose import. Responsible for energy coupling to the transport system. The sequence is that of Ribose import ATP-binding protein RbsA from Clostridium tetani (strain Massachusetts / E88).